The chain runs to 88 residues: ATP synthase F(0) complex subunit f, mitochondrial (88 aa).

Ala2 is subject to N-acetylalanine. Position 3 is a phosphoserine (Ser3). Residue Lys16 is modified to N6-acetyllysine. A helical transmembrane segment spans residues 62–79 (MVLAAYVVFNYCRSYKEL).

Belongs to the ATPase F chain family. As to quaternary structure, component of the ATP synthase complex composed at least of ATP5F1A/subunit alpha, ATP5F1B/subunit beta, ATP5MC1/subunit c (homooctomer), MT-ATP6/subunit a, MT-ATP8/subunit 8, ATP5ME/subunit e, ATP5MF/subunit f, ATP5MG/subunit g, ATP5MK/subunit k, ATP5MJ/subunit j, ATP5F1C/subunit gamma, ATP5F1D/subunit delta, ATP5F1E/subunit epsilon, ATP5PF/subunit F6, ATP5PB/subunit b, ATP5PD/subunit d, ATP5PO/subunit OSCP. ATP synthase complex consists of a soluble F(1) head domain (subunits alpha(3) and beta(3)) - the catalytic core - and a membrane F(0) domain - the membrane proton channel (subunits c, a, 8, e, f, g, k and j). These two domains are linked by a central stalk (subunits gamma, delta, and epsilon) rotating inside the F1 region and a stationary peripheral stalk (subunits F6, b, d, and OSCP).

The protein resides in the mitochondrion. It is found in the mitochondrion inner membrane. Functionally, subunit f, of the mitochondrial membrane ATP synthase complex (F(1)F(0) ATP synthase or Complex V) that produces ATP from ADP in the presence of a proton gradient across the membrane which is generated by electron transport complexes of the respiratory chain. ATP synthase complex consist of a soluble F(1) head domain - the catalytic core - and a membrane F(1) domain - the membrane proton channel. These two domains are linked by a central stalk rotating inside the F(1) region and a stationary peripheral stalk. During catalysis, ATP synthesis in the catalytic domain of F(1) is coupled via a rotary mechanism of the central stalk subunits to proton translocation. In vivo, can only synthesize ATP although its ATP hydrolase activity can be activated artificially in vitro. Part of the complex F(0) domain. In Sus scrofa (Pig), this protein is ATP synthase F(0) complex subunit f, mitochondrial.